Consider the following 1443-residue polypeptide: Cleavage and polyadenylation specificity factor subunit 1 (1443 aa).

4 disordered regions span residues 404 to 435, 546 to 570, 715 to 777, and 901 to 921; these read PASA…AAGK, EEDN…DDGR, GGAR…PAPF, and FREK…AEEG. Basic and acidic residues predominate over residues 410 to 419; that stretch reads EAADKEEPPS. Phosphoserine is present on residues serine 756 and serine 766. Residues 758 to 775 show a composition bias toward basic and acidic residues; it reads SKEEARRSSQPPADRDPA. Positions 893–908 match the Nuclear localization signal motif; that stretch reads KKVPHNINFREKKPKP.

This sequence belongs to the CPSF1 family. As to quaternary structure, component of the cleavage and polyadenylation specificity factor (CPSF) complex, composed of CPSF1, CPSF2, CPSF3, CPSF4 and FIP1L1. Found in a complex with CPSF1, FIP1L1 and PAPOLA. Interacts with FIP1L1, TENT2/GLD2 and SRRM1. Interacts with TUT1; the interaction is direct and mediates the recruitment of the CPSF complex on the 3'UTR of selected pre-mRNAs. The N-terminus is blocked. In terms of tissue distribution, widely expressed, with high expression in the retina.

The protein localises to the nucleus. It localises to the nucleoplasm. Component of the cleavage and polyadenylation specificity factor (CPSF) complex that plays a key role in pre-mRNA 3'-end formation, recognizing the AAUAAA signal sequence and interacting with poly(A) polymerase and other factors to bring about cleavage and poly(A) addition. This subunit is involved in the RNA recognition step of the polyadenylation reaction. May play a role in eye morphogenesis and the development of retinal ganglion cell projections to the midbrain. The protein is Cleavage and polyadenylation specificity factor subunit 1 (CPSF1) of Homo sapiens (Human).